The sequence spans 100 residues: MTPLSPQARATLLAELPGWTDVDNRDAIQKRFTFPDFNAAFAFMTRVAIQAEKADHHPEWFNVYNRVDITLSTHDANGLTQRDIDLAHFIERAAASLRVE.

This sequence belongs to the pterin-4-alpha-carbinolamine dehydratase family.

It carries out the reaction (4aS,6R)-4a-hydroxy-L-erythro-5,6,7,8-tetrahydrobiopterin = (6R)-L-erythro-6,7-dihydrobiopterin + H2O. This Cupriavidus pinatubonensis (strain JMP 134 / LMG 1197) (Cupriavidus necator (strain JMP 134)) protein is Putative pterin-4-alpha-carbinolamine dehydratase 2.